Here is a 944-residue protein sequence, read N- to C-terminus: Breast cancer type 2 susceptibility protein homolog (944 aa).

Composition is skewed to basic and acidic residues over residues 325 to 348 and 415 to 431; these read KKVKLEPSSQKEQKSSKDSNESKI and NSIKRNDEEQPEKETPN. 2 disordered regions span residues 325–354 and 415–440; these read KKVKLEPSSQKEQKSSKDSNESKIRAASCD and NSIKRNDEEQPEKETPNKSRSTSSHQ. BRCA2 repeat units follow at residues 543 to 577, 644 to 678, and 719 to 753; these read AEPEFCGFRTASNKAIPISEKMKIKTAEFMAEFQS, NESQFFGFRTASNKAIEITEAMEKRGAMFLAQSRA, and SETEFFGFRTASNKGIVISENTKKKVAQFMSEFQA. Disordered stretches follow at residues 823–854 and 876–944; these read LCSQPLVRTPRRSQEIHSSLSQLAGQSPLDQA and SSTE…RSRY. 2 stretches are compositionally biased toward polar residues: residues 838–852 and 876–885; these read IHSSLSQLAGQSPLD and SSTETSTSCA. Basic and acidic residues predominate over residues 904–921; the sequence is ADRDLNRSKDCAKNRQDA. Basic residues predominate over residues 932–944; sequence KKSRRLGLSRSRY.

In terms of assembly, interacts with Rad9 and spn-A/Rad51.

It is found in the nucleus. In terms of biological role, involved in and required for double-strand break repair by meiotic and mitotic homologous recombination. During meiosis, has a dual role in the repair of meiotic double-stranded breaks and the efficient activation of the meiotic recombination checkpoint. This is Breast cancer type 2 susceptibility protein homolog from Drosophila simulans (Fruit fly).